The following is an 85-amino-acid chain: YcgL domain-containing protein PC1_1941 (85 aa).

Positions 1–85 (MFCVIYRSAK…PVENLLNTPV (85 aa)) constitute a YcgL domain.

This chain is YcgL domain-containing protein PC1_1941, found in Pectobacterium carotovorum subsp. carotovorum (strain PC1).